The primary structure comprises 197 residues: Putative phosphopantothenoylcysteine decarboxylase (197 aa).

Residues phenylalanine 52 and 102–105 (SANT) contribute to the FMN site. A substrate-binding site is contributed by asparagine 139. The active-site Proton donor is the cysteine 174.

The protein belongs to the HFCD (homooligomeric flavin containing Cys decarboxylase) superfamily. As to quaternary structure, homotrimer. The cofactor is FMN.

The enzyme catalyses N-[(R)-4-phosphopantothenoyl]-L-cysteine + H(+) = (R)-4'-phosphopantetheine + CO2. It functions in the pathway cofactor biosynthesis; coenzyme A biosynthesis; CoA from (R)-pantothenate: step 3/5. Necessary for the biosynthesis of coenzyme A. Catalyzes the decarboxylation of 4-phosphopantothenoylcysteine to form 4'-phosphopantotheine. This Dictyostelium discoideum (Social amoeba) protein is Putative phosphopantothenoylcysteine decarboxylase (ppcdc).